Consider the following 556-residue polypeptide: Serine/threonine-protein kinase PksC (556 aa).

The region spanning 20 to 287 (YQLRDLLGEG…SAEAMRDECL (268 aa)) is the Protein kinase domain. ATP contacts are provided by residues 26–34 (LGEGGMASV) and Lys49. The active-site Proton acceptor is Asp151. Disordered regions lie at residues 300 to 403 (IVPG…PGGK) and 435 to 485 (EDPE…DPDK). Residues 336–348 (QPTPSPGPNPYGT) show a composition bias toward pro residues. Low complexity-rich tracts occupy residues 360–381 (YPQQ…QAAA) and 445–458 (STAS…KAAG). Positions 461–475 (GPDKEKTIEKDKCTE) are enriched in basic and acidic residues. The PASTA domain occupies 482–550 (DPDKIQVPDF…MPEIQLKVST (69 aa)).

The protein belongs to the protein kinase superfamily. Ser/Thr protein kinase family.

It catalyses the reaction L-seryl-[protein] + ATP = O-phospho-L-seryl-[protein] + ADP + H(+). The catalysed reaction is L-threonyl-[protein] + ATP = O-phospho-L-threonyl-[protein] + ADP + H(+). This Streptomyces coelicolor (strain ATCC BAA-471 / A3(2) / M145) protein is Serine/threonine-protein kinase PksC (pksC).